The primary structure comprises 356 residues: Geranylgeranyl pyrophosphate synthase penG (356 aa).

K83, R86, and H115 together coordinate isopentenyl diphosphate. 2 residues coordinate Mg(2+): D122 and D126. R131 contributes to the dimethylallyl diphosphate binding site. R132 contributes to the isopentenyl diphosphate binding site. Residues K209, T210, and Q243 each contribute to the dimethylallyl diphosphate site. A Mg(2+)-binding site is contributed by D246. Residues N250, K260, and K270 each coordinate dimethylallyl diphosphate.

The protein belongs to the FPP/GGPP synthase family. Requires Mg(2+) as cofactor.

It catalyses the reaction isopentenyl diphosphate + dimethylallyl diphosphate = (2E)-geranyl diphosphate + diphosphate. It carries out the reaction isopentenyl diphosphate + (2E)-geranyl diphosphate = (2E,6E)-farnesyl diphosphate + diphosphate. The enzyme catalyses isopentenyl diphosphate + (2E,6E)-farnesyl diphosphate = (2E,6E,10E)-geranylgeranyl diphosphate + diphosphate. It participates in secondary metabolite biosynthesis. In terms of biological role, geranylgeranyl pyrophosphate synthase; part of the gene cluster that mediates the biosynthesis of the indole diterpenes penitrems. The geranylgeranyl diphosphate (GGPP) synthase ptmG catalyzes the first step in penitrem biosynthesis via conversion of farnesyl pyrophosphate and isopentyl pyrophosphate into geranylgeranyl pyrophosphate (GGPP). Condensation of indole-3-glycerol phosphate with GGPP by the prenyl transferase ptmC then forms 3-geranylgeranylindole (3-GGI). Epoxidation by the FAD-dependent monooxygenase ptmM leads to a epoxidized-GGI that is substrate of the terpene cyclase ptmB for cyclization to yield paspaline. Paspaline is subsequently converted to 13-desoxypaxilline by the cytochrome P450 monooxygenase ptmP, the latter being then converted to paxilline by the cytochrome P450 monooxygenase ptmQ. Paxilline is converted to beta-paxitriol via C-10 ketoreduction by the short-chain dehydrogenase ptmH which can be monoprenylated at the C-20 by the indole diterpene prenyltransferase ptmD. A two-step elimination (acetylation and elimination) process performed by the O-acetyltransferase ptmV and ptmI leads to the production of the prenylated form of penijanthine. The FAD-linked oxidoreductase ptmO then converts the prenylated form of penijanthine into PC-M5 which is in turn transformed into PC-M4 by the aromatic dimethylallyltransferase ptmE. Five sequential oxidative transformations performed by the cytochrome P450 monooxygenases ptmK, ptmU, ptmL, ptmN and ptmJ yield the various penitrem compounds. PtmK, ptmU and ptmM are involved in the formation of the key bicyclic ring of penitrem C via the formation of the intermediates secopenitrem D and penitrem D. PtmL catalyzes the epoxidation of penitrem D and C to yield penitrem B and F, respectively. PtmJ catalyzes the last benzylic hydroxylation to convert penitrem B to prenitrem E and penitrem F to penitrem A. The polypeptide is Geranylgeranyl pyrophosphate synthase penG (Penicillium ochrochloron).